The following is a 292-amino-acid chain: MSERLSGHTLLVSLLATPIRHSLSPKMHNEAYAKLGLDYAYLAFEVGTEQLADAVQGIRALGIRGSNVSMPNKEAILPLLDDLSPAAELVGAVNTVVNKDGKGHLVGHITDGIGALRALADEGVSVKNKIITLAGVGGAGKAIAVQLAFDGAKEIRLFNRQATRLSSVQKLVTKLNQLTRTKVTLQDLEDQTAFKEAIRESHLFIDATSVGMKPLENLSLITDPELIRPDLVVFDIVYSPAETKLLAFARQHGAQKVINGLGMVLYQGAEAFKLITGQDMPVDAIKPLLGDK.

Shikimate is bound by residues 22-24 and serine 69; that span reads SLS. The active-site Proton acceptor is the lysine 73. Shikimate contacts are provided by asparagine 94 and aspartate 111. NADP(+) is bound by residues 135 to 139 and isoleucine 236; that span reads GVGGA. Tyrosine 238 is a binding site for shikimate. Glycine 260 contacts NADP(+).

Belongs to the shikimate dehydrogenase family. Homodimer.

The enzyme catalyses shikimate + NADP(+) = 3-dehydroshikimate + NADPH + H(+). Its pathway is metabolic intermediate biosynthesis; chorismate biosynthesis; chorismate from D-erythrose 4-phosphate and phosphoenolpyruvate: step 4/7. Its function is as follows. Involved in the biosynthesis of the chorismate, which leads to the biosynthesis of aromatic amino acids. Catalyzes the reversible NADPH linked reduction of 3-dehydroshikimate (DHSA) to yield shikimate (SA). The polypeptide is Shikimate dehydrogenase (NADP(+)) (Streptococcus pyogenes serotype M18 (strain MGAS8232)).